Consider the following 208-residue polypeptide: Uracil phosphoribosyltransferase (208 aa).

Residues Arg-78, Arg-103, and 130–138 contribute to the 5-phospho-alpha-D-ribose 1-diphosphate site; that span reads DPMLATGGS. Uracil-binding positions include Ile-193 and 198–200; that span reads GDA. Residue Asp-199 participates in 5-phospho-alpha-D-ribose 1-diphosphate binding.

This sequence belongs to the UPRTase family. It depends on Mg(2+) as a cofactor.

It catalyses the reaction UMP + diphosphate = 5-phospho-alpha-D-ribose 1-diphosphate + uracil. The protein operates within pyrimidine metabolism; UMP biosynthesis via salvage pathway; UMP from uracil: step 1/1. Its activity is regulated as follows. Allosterically activated by GTP. Functionally, catalyzes the conversion of uracil and 5-phospho-alpha-D-ribose 1-diphosphate (PRPP) to UMP and diphosphate. The chain is Uracil phosphoribosyltransferase from Pelobacter propionicus (strain DSM 2379 / NBRC 103807 / OttBd1).